Consider the following 430-residue polypeptide: BSD domain-containing protein 1 (430 aa).

Phosphoserine is present on residues serine 92 and serine 166. Residues 146–198 enclose the BSD domain; that stretch reads WLSQFCLEEKKGEISELLVGSPSIRALYTKMVPAAVSHSEFWHRYFYKVHQLE. Disordered stretches follow at residues 247–298 and 319–398; these read STFP…APEA and LAVD…WEKD. A compositionally biased stretch (polar residues) spans 276–291; sequence PSESSESISLVTQIAN. The span at 350–367 shows a compositional bias: basic and acidic residues; the sequence is PPARVETLREEAPTDLRV. A Phosphothreonine modification is found at threonine 356. The segment covering 371-390 has biased composition (polar residues); the sequence is NSDSGKSTPSNNGKKGSSTD. Residues serine 387, serine 388, and serine 418 each carry the phosphoserine modification.

This Homo sapiens (Human) protein is BSD domain-containing protein 1 (BSDC1).